The following is a 114-amino-acid chain: Fluoride-specific ion channel FluC 1 (114 aa).

Transmembrane regions (helical) follow at residues 23-43, 52-72, and 84-104; these read ATLTINLLGSFLLAWLTSYVF, LSTAIGTGFVGSFTTFSTLSV, and FLAMVYVLVSLLGGLTMSHLG. G62 and T65 together coordinate Na(+).

The protein belongs to the fluoride channel Fluc/FEX (TC 1.A.43) family.

Its subcellular location is the cell membrane. It catalyses the reaction fluoride(in) = fluoride(out). Na(+) is not transported, but it plays an essential structural role and its presence is essential for fluoride channel function. Functionally, fluoride-specific ion channel. Important for reducing fluoride concentration in the cell, thus reducing its toxicity. The sequence is that of Fluoride-specific ion channel FluC 1 from Desulfitobacterium hafniense (strain Y51).